We begin with the raw amino-acid sequence, 293 residues long: tRNA pseudouridine synthase B (293 aa).

D38 serves as the catalytic Nucleophile.

It belongs to the pseudouridine synthase TruB family. Type 1 subfamily.

The enzyme catalyses uridine(55) in tRNA = pseudouridine(55) in tRNA. Functionally, responsible for synthesis of pseudouridine from uracil-55 in the psi GC loop of transfer RNAs. In Solibacter usitatus (strain Ellin6076), this protein is tRNA pseudouridine synthase B.